Consider the following 142-residue polypeptide: Large ribosomal subunit protein uL11 (142 aa).

This sequence belongs to the universal ribosomal protein uL11 family. In terms of assembly, part of the ribosomal stalk of the 50S ribosomal subunit. Interacts with L10 and the large rRNA to form the base of the stalk. L10 forms an elongated spine to which L12 dimers bind in a sequential fashion forming a multimeric L10(L12)X complex. In terms of processing, one or more lysine residues are methylated.

Forms part of the ribosomal stalk which helps the ribosome interact with GTP-bound translation factors. In Colwellia psychrerythraea (strain 34H / ATCC BAA-681) (Vibrio psychroerythus), this protein is Large ribosomal subunit protein uL11.